The sequence spans 367 residues: Aurora kinase (367 aa).

The interval 30 to 49 (TTATNGAPPQARVQPGKGYR) is disordered. One can recognise a Protein kinase domain in the interval 109 to 360 (FEIGKVLGKG…LKEVKKHPWI (252 aa)). ATP-binding positions include 115 to 123 (LGKGKFGRV) and Lys-138. Asp-232 serves as the catalytic Proton acceptor.

Belongs to the protein kinase superfamily. Ser/Thr protein kinase family. Aurora subfamily.

The protein localises to the nucleus. Its subcellular location is the cytoplasm. The protein resides in the cytoskeleton. It is found in the spindle. It localises to the chromosome. The protein localises to the centromere. Its subcellular location is the kinetochore. It catalyses the reaction L-seryl-[protein] + ATP = O-phospho-L-seryl-[protein] + ADP + H(+). The catalysed reaction is L-threonyl-[protein] + ATP = O-phospho-L-threonyl-[protein] + ADP + H(+). Functionally, component of the chromosomal passenger complex (CPC), a complex that acts as a key regulator of chromosome segregation and cytokinesis. Has a role in error-correction of aberrent kinetochore-microtubule attachments to ensure that sister kinetochores become bioriented and connect to opposite poles by promoting spindle assembly checkpoint signaling. The chain is Aurora kinase (IPL1) from Eremothecium gossypii (strain ATCC 10895 / CBS 109.51 / FGSC 9923 / NRRL Y-1056) (Yeast).